The sequence spans 210 residues: Ribosomal RNA large subunit methyltransferase E (210 aa).

S-adenosyl-L-methionine-binding residues include Gly60, Trp62, Asp80, Asp96, and Asp122. Lys162 acts as the Proton acceptor in catalysis.

It belongs to the class I-like SAM-binding methyltransferase superfamily. RNA methyltransferase RlmE family.

Its subcellular location is the cytoplasm. The enzyme catalyses uridine(2552) in 23S rRNA + S-adenosyl-L-methionine = 2'-O-methyluridine(2552) in 23S rRNA + S-adenosyl-L-homocysteine + H(+). Specifically methylates the uridine in position 2552 of 23S rRNA at the 2'-O position of the ribose in the fully assembled 50S ribosomal subunit. The chain is Ribosomal RNA large subunit methyltransferase E from Dichelobacter nodosus (strain VCS1703A).